The chain runs to 57 residues: Large ribosomal subunit protein bL32 (57 aa).

The protein belongs to the bacterial ribosomal protein bL32 family.

The chain is Large ribosomal subunit protein bL32 from Bacillus anthracis (strain A0248).